The chain runs to 808 residues: MANAERMITRVHSQRERLNETLVSERNEVLALLSRVEAKGKGILQQNQIIAEFEALPEQTRKKLEGGPFFDLLKSTQEAIVLPPWVALAVRPRPGVWEYLRVNLHALVVEELQPAEFLHFKEELVDGVKNGNFTLELDFEPFNASIPRPTLHKYIGNGVDFLNRHLSAKLFHDKESLLPLLKFLRLHSHQGKNLMLSEKIQNLNTLQHTLRKAEEYLAELKSETLYEEFEAKFEEIGLERGWGDNAERVLDMIRLLLDLLEAPDPCTLETFLGRVPMVFNVVILSPHGYFAQDNVLGYPDTGGQVVYILDQVRALEIEMLQRIKQQGLNIKPRILILTRLLPDAVGTTCGERLERVYDSEYCDILRVPFRTEKGIVRKWISRFEVWPYLETYTEDAAVELSKELNGKPDLIIGNYSDGNLVASLLAHKLGVTQCTIAHALEKTKYPDSDIYWKKLDDKYHFSCQFTADIFAMNHTDFIITSTFQEIAGSKETVGQYESHTAFTLPGLYRVVHGIDVFDPKFNIVSPGADMSIYFPYTEEKRRLTKFHSEIEELLYSDVENKEHLCVLKDKKKPILFTMARLDRVKNLSGLVEWYGKNTRLRELANLVVVGGDRRKESKDNEEKAEMKKMYDLIEEYKLNGQFRWISSQMDRVRNGELYRYICDTKGAFVQPALYEAFGLTVVEAMTCGLPTFATCKGGPAEIIVHGKSGFHIDPYHGDQAADTLADFFTKCKEDPSHWDEISKGGLQRIEEKYTWQIYSQRLLTLTGVYGFWKHVSNLDRLEARRYLEMFYALKYRPLAQAVPLAQDD.

The GT-B glycosyltransferase stretch occupies residues Met-277–Thr-754.

It belongs to the glycosyltransferase 1 family. Plant sucrose synthase subfamily. In terms of assembly, homotetramer. In terms of tissue distribution, expressed in the phloem of leaves and in roots. Detected in the whole plant but more precisely confined to the vasculature in cotyledons, mature leaves and siliques.

The catalysed reaction is an NDP-alpha-D-glucose + D-fructose = a ribonucleoside 5'-diphosphate + sucrose + H(+). In terms of biological role, sucrose-cleaving enzyme that provides UDP-glucose and fructose for various metabolic pathways. This chain is Sucrose synthase 1 (SUS1), found in Arabidopsis thaliana (Mouse-ear cress).